Reading from the N-terminus, the 459-residue chain is Anthocyanidin 3-O-glucoside 2''-O-glucosyltransferase (459 aa).

His20 acts as the Proton acceptor in catalysis. An an anthocyanidin-binding site is contributed by His20. The active-site Charge relay is Asp117. UDP-alpha-D-glucose contacts are provided by Thr138, Val335, Gln337, His352, Trp355, Ser357, and Glu360. Residue Gly375 coordinates an anthocyanidin. The UDP-alpha-D-glucose site is built by Asp376 and Gln377.

Belongs to the UDP-glycosyltransferase family.

The enzyme catalyses an anthocyanidin 3-O-beta-D-glucoside + UDP-alpha-D-glucose = an anthocyanidin 3-O-sophoroside + UDP + 2 H(+). Its pathway is pigment biosynthesis; anthocyanin biosynthesis. Glycosyltransferase that mediates the glucosylation of anthocyanidin 3-O-glucosides to yield anthocyanidin 3-O-sophorosides. 3-O-sophoroside derivatives are required for the color of flowers. The polypeptide is Anthocyanidin 3-O-glucoside 2''-O-glucosyltransferase (3GGT) (Ipomoea purpurea (Common morning glory)).